We begin with the raw amino-acid sequence, 141 residues long: VLSASDKTNLKAAWDKLGGQAANYGAEALERTFASFPTTKTYFPHFDLSPGSAQVKGHGKKVADALTKAVGSLDDLPGALSALSDLHAHKLRVDPVNFKLLSHCLLVTLASHHPADFTPAVHASLDKFLATVSTVLTSKYR.

A Globin domain is found at 1 to 141; sequence VLSASDKTNL…VSTVLTSKYR (141 aa). A Phosphoserine modification is found at Ser-3. Lys-7 is modified (N6-succinyllysine). Thr-8 carries the phosphothreonine modification. The residue at position 11 (Lys-11) is an N6-succinyllysine. An N6-acetyllysine; alternate modification is found at Lys-16. An N6-succinyllysine; alternate modification is found at Lys-16. The residue at position 24 (Tyr-24) is a Phosphotyrosine. Phosphoserine is present on Ser-35. The residue at position 40 (Lys-40) is an N6-succinyllysine. Ser-49 bears the Phosphoserine mark. His-58 is a binding site for O2. Position 87 (His-87) interacts with heme b. Ser-102 bears the Phosphoserine mark. Thr-108 bears the Phosphothreonine mark. The residue at position 124 (Ser-124) is a Phosphoserine. A phosphothreonine mark is found at Thr-134 and Thr-137. Residue Ser-138 is modified to Phosphoserine.

Belongs to the globin family. In terms of assembly, heterotetramer of two alpha chains and two beta chains. Red blood cells.

In terms of biological role, involved in oxygen transport from the lung to the various peripheral tissues. This chain is Hemoglobin subunit alpha, found in Blarina brevicauda (Northern short-tailed shrew).